The chain runs to 631 residues: Peptide-N(4)-(N-acetyl-beta-glucosaminyl)asparagine amidase (631 aa).

The 64-residue stretch at 34-97 (EAVRILLVLL…PSSNAYTLPT (64 aa)) folds into the PUB domain. Serine 126 is modified (phosphoserine). Positions 246, 249, 272, and 273 each coordinate Zn(2+). Cysteine 296 (nucleophile) is an active-site residue. Residues histidine 323 and aspartate 340 contribute to the active site. Positions 441-631 (ELKGRSSGSL…YPFDLQVQLH (191 aa)) constitute a PAW domain.

This sequence belongs to the transglutaminase-like superfamily. PNGase family. It depends on Zn(2+) as a cofactor.

Its subcellular location is the cytoplasm. It catalyses the reaction Hydrolysis of an N(4)-(acetyl-beta-D-glucosaminyl)asparagine residue in which the glucosamine residue may be further glycosylated, to yield a (substituted) N-acetyl-beta-D-glucosaminylamine and a peptide containing an aspartate residue.. In terms of biological role, specifically deglycosylates the denatured form of N-linked glycoproteins in the cytoplasm and assists their proteasome-mediated degradation. Cleaves the beta-aspartyl-glucosamine (GlcNAc) of the glycan and the amide side chain of Asn, converting Asn to Asp. Prefers proteins containing high-mannose over those bearing complex type oligosaccharides. Can recognize misfolded proteins in the endoplasmic reticulum that are exported to the cytosol to be destroyed and deglycosylate them, while it has no activity toward native proteins. Deglycosylation is a prerequisite for subsequent proteasome-mediated degradation of some, but not all, misfolded glycoproteins. The polypeptide is Peptide-N(4)-(N-acetyl-beta-glucosaminyl)asparagine amidase (Pngl) (Drosophila melanogaster (Fruit fly)).